A 69-amino-acid polypeptide reads, in one-letter code: uncharacterized protein (69 aa).

A signal peptide spans 1–21 (MELLIPLSLLGLYLFSGTRDS). Asparagine 41 carries N-linked (GlcNAc...) asparagine glycosylation.

It localises to the secreted. This is an uncharacterized protein from Dictyostelium discoideum (Social amoeba).